The primary structure comprises 423 residues: Serine/threonine-protein kinase ppk25 (423 aa).

Phosphoserine occurs at positions 36 and 38. The region spanning 53–305 (WIIKKTIGAG…LEQAAKFPWL (253 aa)) is the Protein kinase domain. Residues 59–67 (IGAGSMGKV) and K82 contribute to the ATP site. Residue D175 is the Proton acceptor of the active site.

Belongs to the protein kinase superfamily. Ser/Thr protein kinase family.

Its subcellular location is the cytoplasm. It catalyses the reaction L-seryl-[protein] + ATP = O-phospho-L-seryl-[protein] + ADP + H(+). It carries out the reaction L-threonyl-[protein] + ATP = O-phospho-L-threonyl-[protein] + ADP + H(+). This Schizosaccharomyces pombe (strain 972 / ATCC 24843) (Fission yeast) protein is Serine/threonine-protein kinase ppk25 (ppk25).